Consider the following 123-residue polypeptide: Protein Wnt-3b (123 aa).

Residue Ser-1 is the site of O-palmitoleoyl serine; by PORCN attachment. Cys-89 and Cys-104 are oxidised to a cystine. A glycan (N-linked (GlcNAc...) asparagine) is linked at Asn-90.

The protein belongs to the Wnt family. In terms of processing, palmitoleoylation is required for efficient binding to frizzled receptors. Depalmitoleoylation leads to Wnt signaling pathway inhibition.

The protein localises to the secreted. Its subcellular location is the extracellular space. It localises to the extracellular matrix. Its function is as follows. Ligand for members of the frizzled family of seven transmembrane receptors. Probable developmental protein. May be a signaling molecule which affects the development of discrete regions of tissues. Is likely to signal over only few cell diameters. The chain is Protein Wnt-3b (WNT-3B) from Plethodon jordani (Red-cheeked salamander).